Here is a 622-residue protein sequence, read N- to C-terminus: Peptidoglycan O-acetyltransferase OatA (622 aa).

A run of 11 helical transmembrane segments spans residues 11-31, 39-59, 81-101, 143-163, 173-193, 212-232, 237-257, 267-287, 307-327, 334-354, and 387-407; these read YVPSIDGLRALAVIAVIAYHL, GFIGVDIFFVLSGYLITNILL, LIPAVYVMIVVVVIYSVFFHP, LWSLAIEEQFYLIWPAFLLVF, LLKIVIGLGLLSAVWMTILYV, LLSGCALAFVWPFNRLSPVVP, AVLNIAGTISILCFILFTAFV, GGLLFVAILGVIMIATISHPA, YGIYLWHYPIITLTTPVLEIT, AILQVAATFIIAELSFRFIET, and IAGVVAVLAIFTLGMSNVLSV. The interval 412–467 is disordered; that stretch reads EKQQTSVKTTTSTPDEKKDDKKEDKATKDKEADSNKASEQKETQKPDNKNKSAATP. Residues 413–424 show a composition bias toward low complexity; that stretch reads KQQTSVKTTTST. Basic and acidic residues predominate over residues 425–461; that stretch reads PDEKKDDKKEDKATKDKEADSNKASEQKETQKPDNKN. Catalysis depends on residues S480, D600, and H603.

Belongs to the acyltransferase 3 family.

It localises to the cell membrane. The protein resides in the secreted. It is found in the cell wall. Functionally, responsible for O-acetylation at the C6-hydroxyl group of N-acetylmuramyl residues, forming the corresponding N,6-O-diacetylmuramic acid of the peptidoglycan. O-acetylation of the peptidoglycan is the major determinant for lysozyme resistance. Critical for virulence and escape from innate immune response of the host. Involved at both early and later stages of listeriosis in the mouse model of infection. Required for successful host colonization and for intracellular survival of bacteria in macrophages of the infected host. Controls the production of inflammatory mediators in the liver of the infected host. Confers resistance to host antimicrobial molecules and to cell wall-targeting molecules such as beta-lactam antibiotics and bacteriocins. The sequence is that of Peptidoglycan O-acetyltransferase OatA from Listeria monocytogenes serovar 1/2a (strain ATCC BAA-679 / EGD-e).